Reading from the N-terminus, the 181-residue chain is Large ribosomal subunit protein bL19 (181 aa).

A compositionally biased stretch (basic and acidic residues) spans 162–173 (EKKAAAEAEAAK). The disordered stretch occupies residues 162–181 (EKKAAAEAEAAKAAEATPAE).

The protein belongs to the bacterial ribosomal protein bL19 family.

This protein is located at the 30S-50S ribosomal subunit interface and may play a role in the structure and function of the aminoacyl-tRNA binding site. The sequence is that of Large ribosomal subunit protein bL19 from Mesorhizobium japonicum (strain LMG 29417 / CECT 9101 / MAFF 303099) (Mesorhizobium loti (strain MAFF 303099)).